Reading from the N-terminus, the 269-residue chain is Phosphonoacetaldehyde hydrolase (269 aa).

The active-site Nucleophile is aspartate 10. Mg(2+) contacts are provided by aspartate 10 and alanine 12. Lysine 52 (schiff-base intermediate with substrate) is an active-site residue. Mg(2+) is bound at residue aspartate 186.

Belongs to the HAD-like hydrolase superfamily. PhnX family. As to quaternary structure, homodimer. Requires Mg(2+) as cofactor.

It carries out the reaction phosphonoacetaldehyde + H2O = acetaldehyde + phosphate + H(+). Involved in phosphonate degradation. The sequence is that of Phosphonoacetaldehyde hydrolase from Salmonella typhi.